A 171-amino-acid chain; its full sequence is Peptide deformylase (171 aa).

Positions 91 and 133 each coordinate Fe cation. Glu134 is an active-site residue. Position 137 (His137) interacts with Fe cation.

Belongs to the polypeptide deformylase family. Fe(2+) serves as cofactor.

The catalysed reaction is N-terminal N-formyl-L-methionyl-[peptide] + H2O = N-terminal L-methionyl-[peptide] + formate. Its function is as follows. Removes the formyl group from the N-terminal Met of newly synthesized proteins. Requires at least a dipeptide for an efficient rate of reaction. N-terminal L-methionine is a prerequisite for activity but the enzyme has broad specificity at other positions. The protein is Peptide deformylase of Hamiltonella defensa subsp. Acyrthosiphon pisum (strain 5AT).